The following is a 200-amino-acid chain: Probable GTP-binding protein EngB (200 aa).

The EngB-type G domain occupies 22–195 (GKDEIAFVGR…INNICSGINY (174 aa)). GTP contacts are provided by residues 30 to 37 (GRSNVGKS), 57 to 61 (GKTRL), 75 to 78 (DLPG), 142 to 145 (TKSD), and 174 to 176 (FSS). The Mg(2+) site is built by Ser-37 and Thr-59.

The protein belongs to the TRAFAC class TrmE-Era-EngA-EngB-Septin-like GTPase superfamily. EngB GTPase family. Mg(2+) serves as cofactor.

Functionally, necessary for normal cell division and for the maintenance of normal septation. In Clostridium acetobutylicum (strain ATCC 824 / DSM 792 / JCM 1419 / IAM 19013 / LMG 5710 / NBRC 13948 / NRRL B-527 / VKM B-1787 / 2291 / W), this protein is Probable GTP-binding protein EngB.